The following is a 231-amino-acid chain: Isoprenyl transferase (231 aa).

Residue D14 is part of the active site. D14 serves as a coordination point for Mg(2+). Substrate-binding positions include 15-18 (GNGR), W19, R27, H31, and 59-61 (STE). Catalysis depends on N62, which acts as the Proton acceptor. Residues W63, R65, R176, and 182–184 (RIS) each bind substrate. E195 contributes to the Mg(2+) binding site.

It belongs to the UPP synthase family. Homodimer. Mg(2+) is required as a cofactor.

Its function is as follows. Catalyzes the condensation of isopentenyl diphosphate (IPP) with allylic pyrophosphates generating different type of terpenoids. This chain is Isoprenyl transferase, found in Aquifex pyrophilus.